A 440-amino-acid polypeptide reads, in one-letter code: Xylose isomerase (440 aa).

Residues H100 and D103 contribute to the active site. Mg(2+)-binding residues include E231, E267, H270, D295, D306, D308, and D338.

Belongs to the xylose isomerase family. In terms of assembly, homotetramer. The cofactor is Mg(2+).

The protein localises to the cytoplasm. The enzyme catalyses alpha-D-xylose = alpha-D-xylulofuranose. The protein is Xylose isomerase of Burkholderia orbicola (strain MC0-3).